The chain runs to 286 residues: ATP synthase gamma chain (286 aa).

It belongs to the ATPase gamma chain family. In terms of assembly, F-type ATPases have 2 components, CF(1) - the catalytic core - and CF(0) - the membrane proton channel. CF(1) has five subunits: alpha(3), beta(3), gamma(1), delta(1), epsilon(1). CF(0) has three main subunits: a, b and c.

It is found in the cell inner membrane. Its function is as follows. Produces ATP from ADP in the presence of a proton gradient across the membrane. The gamma chain is believed to be important in regulating ATPase activity and the flow of protons through the CF(0) complex. The sequence is that of ATP synthase gamma chain from Teredinibacter turnerae (strain ATCC 39867 / T7901).